The chain runs to 218 residues: Imidazole glycerol phosphate synthase subunit HisH (218 aa).

One can recognise a Glutamine amidotransferase type-1 domain in the interval 1 to 213 (MTTIIDYGIG…AALPTTEEAG (213 aa)). Residue cysteine 79 is the Nucleophile of the active site. Active-site residues include histidine 188 and glutamate 190.

Heterodimer of HisH and HisF.

The protein localises to the cytoplasm. The enzyme catalyses 5-[(5-phospho-1-deoxy-D-ribulos-1-ylimino)methylamino]-1-(5-phospho-beta-D-ribosyl)imidazole-4-carboxamide + L-glutamine = D-erythro-1-(imidazol-4-yl)glycerol 3-phosphate + 5-amino-1-(5-phospho-beta-D-ribosyl)imidazole-4-carboxamide + L-glutamate + H(+). The catalysed reaction is L-glutamine + H2O = L-glutamate + NH4(+). The protein operates within amino-acid biosynthesis; L-histidine biosynthesis; L-histidine from 5-phospho-alpha-D-ribose 1-diphosphate: step 5/9. Its function is as follows. IGPS catalyzes the conversion of PRFAR and glutamine to IGP, AICAR and glutamate. The HisH subunit catalyzes the hydrolysis of glutamine to glutamate and ammonia as part of the synthesis of IGP and AICAR. The resulting ammonia molecule is channeled to the active site of HisF. In Salinibacter ruber (strain DSM 13855 / M31), this protein is Imidazole glycerol phosphate synthase subunit HisH.